The sequence spans 61 residues: Bowman-Birk type proteinase inhibitor B5 (61 aa).

6 disulfide bridges follow: Cys5–Cys60, Cys6–Cys22, Cys9–Cys56, Cys12–Cys20, Cys29–Cys36, and Cys33–Cys48.

The protein belongs to the Bowman-Birk serine protease inhibitor family. In terms of tissue distribution, expressed in bulb (at protein level).

In terms of biological role, serine protease inhibitor. Inhibits trypsin (Ki = 41 nM) and weakly inhibits chymotrypsin (Ki = 410 nM). Does not inhibit bacterial subtilisin. The sequence is that of Bowman-Birk type proteinase inhibitor B5 from Hyacinthus orientalis (Common hyacinth).